The chain runs to 151 residues: Protein SprT-like (151 aa).

The SprT-like domain occupies 7–147 (QKLTESISES…GKCKGKLHLH (141 aa)). His-67 contributes to the Zn(2+) binding site. Glu-68 is a catalytic residue. His-71 is a binding site for Zn(2+).

This sequence belongs to the SprT family. Zn(2+) serves as cofactor.

Its subcellular location is the cytoplasm. In Staphylococcus carnosus (strain TM300), this protein is Protein SprT-like.